We begin with the raw amino-acid sequence, 254 residues long: Axonemal dynein light intermediate polypeptide 1 (254 aa).

Residues 1–55 (MIPPADSLLKHDNPVLISKNTERKSPKSRPLKVSSPQTVLTAPVPPPPKPKTPLL) form a disordered region. A coiled-coil region spans residues 175–245 (ALQAEQGKSD…KRTNQQLKAQ (71 aa)).

Belongs to the inner dynein arm light chain family.

Its subcellular location is the cell projection. The protein localises to the cilium. It localises to the flagellum. The protein resides in the dynein axonemal particle. It is found in the cytoplasm. In terms of biological role, involved in sperm flagellum assembly. The protein is Axonemal dynein light intermediate polypeptide 1 of Xenopus laevis (African clawed frog).